Reading from the N-terminus, the 193-residue chain is Peptidyl-tRNA hydrolase (193 aa).

Tyr18 serves as a coordination point for tRNA. The Proton acceptor role is filled by His23. Residues Phe69, Asn71, and Asn117 each coordinate tRNA.

The protein belongs to the PTH family. In terms of assembly, monomer.

It localises to the cytoplasm. The catalysed reaction is an N-acyl-L-alpha-aminoacyl-tRNA + H2O = an N-acyl-L-amino acid + a tRNA + H(+). In terms of biological role, hydrolyzes ribosome-free peptidyl-tRNAs (with 1 or more amino acids incorporated), which drop off the ribosome during protein synthesis, or as a result of ribosome stalling. Functionally, catalyzes the release of premature peptidyl moieties from peptidyl-tRNA molecules trapped in stalled 50S ribosomal subunits, and thus maintains levels of free tRNAs and 50S ribosomes. The protein is Peptidyl-tRNA hydrolase of Teredinibacter turnerae (strain ATCC 39867 / T7901).